The sequence spans 701 residues: Polyribonucleotide nucleotidyltransferase (701 aa).

2 residues coordinate Mg(2+): aspartate 487 and aspartate 493. In terms of domain architecture, KH spans 554–613 (PTMLQMKIDSDKIRDVIGKGGATIRGICEETKASIDIEDDGSVKIYGETKEAAEAAKLRV). One can recognise an S1 motif domain in the interval 623–691 (GKIYVGKVER…NRGRIKLSIK (69 aa)).

This sequence belongs to the polyribonucleotide nucleotidyltransferase family. Component of the RNA degradosome, which is a multiprotein complex involved in RNA processing and mRNA degradation. The cofactor is Mg(2+).

It is found in the cytoplasm. The enzyme catalyses RNA(n+1) + phosphate = RNA(n) + a ribonucleoside 5'-diphosphate. In terms of biological role, involved in mRNA degradation. Catalyzes the phosphorolysis of single-stranded polyribonucleotides processively in the 3'- to 5'-direction. This chain is Polyribonucleotide nucleotidyltransferase, found in Pseudomonas aeruginosa (strain LESB58).